Here is a 178-residue protein sequence, read N- to C-terminus: MASSMISSPAVTTVNRAGAGMVAPFTGLKSMAGFPTRKTNNDITSIASNGGRVQCMQVWPPIGKKKFETLSYLPDLDDAQLAKEVEYLLRKGWIPCLEFELEHGFVYREHNRSPXYYDGRYWTMWKLPMFGCTDASQVLKELQEAKTAYPNGFIRIIGFDNVRQVQCISFIAYKPPGF.

A chloroplast-targeting transit peptide spans 1–54 (MASSMISSPAVTTVNRAGAGMVAPFTGLKSMAGFPTRKTNNDITSIASNGGRVQ).

This sequence belongs to the RuBisCO small chain family. As to quaternary structure, heterohexadecamer of 8 large and 8 small subunits.

It is found in the plastid. Its subcellular location is the chloroplast. Its function is as follows. RuBisCO catalyzes two reactions: the carboxylation of D-ribulose 1,5-bisphosphate, the primary event in carbon dioxide fixation, as well as the oxidative fragmentation of the pentose substrate. Both reactions occur simultaneously and in competition at the same active site. Although the small subunit is not catalytic it is essential for maximal activity. This chain is Ribulose bisphosphate carboxylase small subunit, chloroplastic 1, found in Glycine max (Soybean).